The chain runs to 88 residues: U-scoloptoxin(XY)-Er1a (88 aa).

An N-terminal signal peptide occupies residues 1-24 (MASQVVLSFALVVVLAVFVGQVDS). A disordered region spans residues 66 to 88 (RPELSPGAWDDSSEEKDNEASLA). Residues 79–88 (EEKDNEASLA) constitute a propeptide that is removed on maturation.

This sequence belongs to the scoloptoxin-XY family. Post-translationally, contains 3 disulfide bonds. In terms of tissue distribution, expressed by the venom gland.

Its subcellular location is the secreted. This Ethmostigmus rubripes (Giant centipede) protein is U-scoloptoxin(XY)-Er1a.